Here is a 354-residue protein sequence, read N- to C-terminus: Sphingosine-1-phosphate phosphatase 2 (354 aa).

The next 4 membrane-spanning stretches (helical) occupy residues 43 to 63 (YLFR…FLPF), 76 to 96 (LVVI…ILKW), 115 to 135 (YGMP…LLIS), and 140 to 160 (YQYP…LVCL). The phosphatase sequence motif I stretch occupies residues 91–99 (KDILKWPRP). The tract at residues 118-121 (PSTH) is phosphatase sequence motif II. The active-site Proton donor is the H121. The interval 161–172 (SRLYTGMHTVLD) is phosphatase sequence motif III. The active-site Nucleophile is H168. The next 5 helical transmembrane spans lie at 173–193 (ILGG…AWTL), 202–222 (PLFP…YPVS), 235–255 (IVAA…FQLV), 273–293 (TDML…ILLV), and 334–354 (TSVG…LGLL).

It belongs to the type 2 lipid phosphate phosphatase family. Highly expressed in pancreatic islets. Expressed in lung, small interstince, colon, kideny and brain.

The protein localises to the endoplasmic reticulum membrane. It catalyses the reaction sphinganine 1-phosphate + H2O = sphinganine + phosphate. It carries out the reaction sphing-4-enine 1-phosphate + H2O = sphing-4-enine + phosphate. The enzyme catalyses (4R)-hydroxysphinganine 1-phosphate + H2O = (4R)-hydroxysphinganine + phosphate. In terms of biological role, has specific phosphohydrolase activity towards sphingoid base 1-phosphates. Has high phosphohydrolase activity against dihydrosphingosine-1-phosphate and sphingosine-1-phosphate (S1P) in vitro. Sphingosine-1-phosphate phosphatase activity is needed for efficient recycling of sphingosine into the sphingolipid synthesis pathway. May play a role in attenuating intracellular sphingosine 1-phosphate (S1P) signaling. May play a role in pro-inflammatory signaling. Plays a role in the regulation of pancreatic islet beta-cell endoplasmic reticulum stress and proliferation. In Mus musculus (Mouse), this protein is Sphingosine-1-phosphate phosphatase 2.